The following is a 648-amino-acid chain: Actin-related protein 5 (648 aa).

The disordered stretch occupies residues 34–59; it reads LTKPRKDRKKEAAASEGSASQTTVEQ. Coiled-coil stretches lie at residues 277–311 and 340–364; these read TAEQKQEKRRELAHRLLDIKKNREQEKLREDEQQL and TLEDLDSLIATINSRIKRAQERAQS. 2 disordered regions span residues 357-385 and 403-455; these read RAQERAQSGPRPSKQQERLNKMPKPPEGM and GRKQ…GMND. A compositionally biased stretch (basic and acidic residues) spans 414 to 428; sequence EQAKRHTHAAQERMR. S471 and S473 each carry phosphoserine.

Belongs to the actin family. ARP5 subfamily. Component of the chromatin remodeling Ino80 complex.

The protein resides in the nucleus. In terms of biological role, proposed core component of the chromatin remodeling Ino80 complex which is involved in transcriptional regulation, DNA replication and probably DNA repair. In Drosophila melanogaster (Fruit fly), this protein is Actin-related protein 5.